We begin with the raw amino-acid sequence, 116 residues long: Iron-sulfur cluster insertion protein ErpA (116 aa).

Residues Cys-44, Cys-108, and Cys-110 each coordinate iron-sulfur cluster.

This sequence belongs to the HesB/IscA family. Homodimer. The cofactor is iron-sulfur cluster.

In terms of biological role, required for insertion of 4Fe-4S clusters for at least IspG. The polypeptide is Iron-sulfur cluster insertion protein ErpA (Pseudomonas aeruginosa (strain LESB58)).